The chain runs to 419 residues: L-rhamnose isomerase (419 aa).

Mn(2+) is bound by residues histidine 262, aspartate 294, and aspartate 296.

It belongs to the rhamnose isomerase family. As to quaternary structure, homotetramer. The cofactor is Mn(2+).

It localises to the cytoplasm. The catalysed reaction is L-rhamnopyranose = L-rhamnulose. The protein operates within carbohydrate degradation; L-rhamnose degradation; glycerone phosphate from L-rhamnose: step 1/3. Its function is as follows. Catalyzes the interconversion of L-rhamnose and L-rhamnulose. This chain is L-rhamnose isomerase, found in Escherichia coli (strain 55989 / EAEC).